The primary structure comprises 369 residues: 4-hydroxy-3-methylbut-2-en-1-yl diphosphate synthase (flavodoxin) (369 aa).

4 residues coordinate [4Fe-4S] cluster: cysteine 270, cysteine 273, cysteine 305, and glutamate 312.

The protein belongs to the IspG family. [4Fe-4S] cluster serves as cofactor.

The enzyme catalyses (2E)-4-hydroxy-3-methylbut-2-enyl diphosphate + oxidized [flavodoxin] + H2O + 2 H(+) = 2-C-methyl-D-erythritol 2,4-cyclic diphosphate + reduced [flavodoxin]. It participates in isoprenoid biosynthesis; isopentenyl diphosphate biosynthesis via DXP pathway; isopentenyl diphosphate from 1-deoxy-D-xylulose 5-phosphate: step 5/6. Functionally, converts 2C-methyl-D-erythritol 2,4-cyclodiphosphate (ME-2,4cPP) into 1-hydroxy-2-methyl-2-(E)-butenyl 4-diphosphate. This Haemophilus ducreyi (strain 35000HP / ATCC 700724) protein is 4-hydroxy-3-methylbut-2-en-1-yl diphosphate synthase (flavodoxin).